Here is a 353-residue protein sequence, read N- to C-terminus: Stearoyl-CoA desaturase 4 (353 aa).

A disordered region spans residues 1-42 (MTAHLPQEISSRCSTTNIMEPHSRRQQDGEEKMPLQAEDIRP). Over 1-66 (MTAHLPQEIS…EGPPPKLEYV (66 aa)) the chain is Cytoplasmic. Residues 8–18 (EISSRCSTTNI) are compositionally biased toward polar residues. Basic and acidic residues predominate over residues 21–42 (PHSRRQQDGEEKMPLQAEDIRP). A helical membrane pass occupies residues 67–87 (WRNIIFMALLHVGALYGITLV). Residue N69 coordinates substrate. The Lumenal portion of the chain corresponds to 88–91 (PSCK). A helical transmembrane segment spans residues 92–112 (VYTWLLGVFYNVVAGLGITAG). Residues 113-211 (AHRLWSHRTY…EKLVMFQRRY (99 aa)) are Cytoplasmic-facing. Fe cation is bound by residues H114 and H119. Residues 114-119 (HRLWSH) carry the Histidine box-1 motif. N142, R149, and D150 together coordinate substrate. Fe cation-binding residues include H151, H154, and H155. The short motif at 151–155 (HRAHH) is the Histidine box-2 element. 2 residues coordinate substrate: R182 and K183. Residues 212–231 (YKLAVTLMFIILPTLVPWYL) form a helical membrane-spanning segment. Residues 232-235 (WGET) lie on the Lumenal side of the membrane. A helical membrane pass occupies residues 236–257 (FQHSLCVSNFLRYAVLLNFTWL). W256 serves as a coordination point for substrate. The Cytoplasmic portion of the chain corresponds to 258-353 (VNSAAHLYGY…RTGDGSHKSS (96 aa)). Fe cation is bound by residues H263, H292, H295, and H296. The Histidine box-3 signature appears at 292–296 (HNYHH).

Belongs to the fatty acid desaturase type 1 family. Requires Fe(2+) as cofactor. As to expression, detected in heart, but not in brain, liver, skin or adipose tissue.

The protein localises to the endoplasmic reticulum membrane. The protein resides in the microsome membrane. It catalyses the reaction octadecanoyl-CoA + 2 Fe(II)-[cytochrome b5] + O2 + 2 H(+) = (9Z)-octadecenoyl-CoA + 2 Fe(III)-[cytochrome b5] + 2 H2O. It carries out the reaction hexadecanoyl-CoA + 2 Fe(II)-[cytochrome b5] + O2 + 2 H(+) = (9Z)-hexadecenoyl-CoA + 2 Fe(III)-[cytochrome b5] + 2 H2O. In terms of biological role, stearoyl-CoA desaturase that utilizes O(2) and electrons from reduced cytochrome b5 to introduce the first double bond into saturated fatty acyl-CoA substrates. Catalyzes the insertion of a cis double bond at the delta-9 position into fatty acyl-CoA substrates including palmitoyl-CoA and stearoyl-CoA. Required for the biosynthesis of membrane phospholipids, cholesterol esters and triglycerides. This is Stearoyl-CoA desaturase 4 from Mus musculus (Mouse).